The primary structure comprises 918 residues: MTGYTMLRNGGVGNGGQTCMLRWSNRIRLTWLSFTLFIILVFFPLIAHYYLTTLDEADEAGKRIFGPRAGSELCEVKHVLDLCRIRESVSEELLQLEAKRQELNSEIAKLNLKIEACKKSIENAKQDLLQLKNVISQTEHSYKELMAQNQPKLSLPIRLLPEKDDAGLPPPKVTRGCRLHNCFDYSRCPLTSGFPVYVYDSDQFAFGSYLDPLVKQAFQATVRANVYVTENAAIACLYVVLVGEMQEPTVLRPADLEKQLFSLPHWRTDGHNHVIINLSRKSDTQNLLYNVSTGRHVAQSTFYAAQYRAGFDLVVSPLVHAMSEPNFMEIPPQVPVKRKYLFTFQGEKIESLRSSLQEARSFEEEMEGDPPADYDDRIIATLKAVQDSKLDQVLVEFTCKNQPKPSLPTEWALCGEREDRLELLKLSTFALIITPGDPHLLISSGCATRLFEALEVGAVPVVLGEQVQLPYHDMLQWNEAALVVPKPRVTEVHFLLRSLSDSDLLAMRRQGRFLWETYFSTADSIFNTVLAMIRTRIQIPAAPIREEVAAEIPHRSGKAAGTDPNMADNGDLDLGPVETEPPYASPKYLRNFTLTVTDCYRGWNSAPGPFHLFPHTPFDPVLPSEAKFLGSGTGFRPIGGGAGGSGKEFQAALGGNVQREQFTVVMLTYEREEVLMNSLERLNGLPYLNKVVVVWNSPKLPSEDLLWPDIGVPIMVVRTEKNSLNNRFLPWNEIETEAILSIDDDAHLRHDEIMFGFRVWREARDRIVGFPGRYHAWDIPHQSWLYNSNYSCELSMVLTGAAFFHKYYAYLYSYVMPQAIRDMVDEYINCEDIAMNFLVSHITRKPPIKVTSRWTFRCPGCPQALSHDDSHFHERHKCINFFVKVYGYMPLLYTQFRVDSVLFKTRLPHDKTKCFKFI.

Over Met1–Thr30 the chain is Cytoplasmic. A required for interaction with REG3A region spans residues Met1–His140. The helical; Signal-anchor for type II membrane protein transmembrane segment at Trp31–Leu51 threads the bilayer. Residues Thr52–Ile918 lie on the Lumenal side of the membrane. 2 cysteine pairs are disulfide-bonded: Cys177-Cys182 and Cys188-Cys236. N-linked (GlcNAc...) asparagine glycosylation is present at Asn290. Ser361 carries the post-translational modification Phosphoserine. An intrachain disulfide couples Cys399 to Cys414. N-linked (GlcNAc...) asparagine glycosylation occurs at Asn591. The UDP-N-acetyl-alpha-D-glucosamine site is built by Leu667, Arg671, Asn696, Asn722, Arg727, Asp743, Asp744, and Asp745. Asp745 is a Mn(2+) binding site. The N-linked (GlcNAc...) asparagine glycan is linked to Asn789. Cys830 and Cys878 form a disulfide bridge. Positions 831, 832, and 875 each coordinate UDP-N-acetyl-alpha-D-glucosamine. The active site involves Asp832.

Belongs to the glycosyltransferase 47 family. Homodimer; disulfide-linked. Interacts with REG3A. Requires Mn(2+) as cofactor. Expressed in pancreatic islet beta-cells. Expressed in lung epithelial cells. Expressed in microglia.

The protein resides in the endoplasmic reticulum membrane. It is found in the golgi apparatus. It localises to the cell membrane. Its subcellular location is the nucleus. It carries out the reaction 3-O-(beta-D-GlcA-(1-&gt;3)-beta-D-Gal-(1-&gt;3)-beta-D-Gal-(1-&gt;4)-beta-D-Xyl)-L-seryl-[protein] + UDP-N-acetyl-alpha-D-glucosamine = 3-O-(alpha-D-GlcNAc-(1-&gt;4)-beta-D-GlcA-(1-&gt;3)-beta-D-Gal-(1-&gt;3)-beta-D-Gal-(1-&gt;4)-beta-D-Xyl)-L-seryl-[protein] + UDP + H(+). Its pathway is glycan metabolism; heparan sulfate biosynthesis. Its function is as follows. Glycosyltransferase which regulates the biosynthesis of heparan sulfate (HS). Initiates HS synthesis by transferring the first N-acetyl-alpha-D-glucosamine (alpha-GlcNAc) residue (GlcNAcT-I activity) to the tetrasaccharide linker (GlcA-Gal-Gal-Xyl-)Ser core linker. May also transfer alpha-GlcNAc residues during HS elongation (GlcNAcT-II activity). Lacks glucuronyl transferase II (GlcAT-II) activity. Important for both skeletal development and hematopoiesis, through the formation of HS proteoglycans (HSPGs). Through the synthesis of HS, regulates postnatal pancreatic islet maturation and insulin secretion. Receptor for REG3A, REG3B and REG3G, induces the activation of downstream signaling pathways such as PI3K-AKT or RAS-RAF-MEK-ERK signaling pathway. Required for the function of REG3A in regulating keratinocyte proliferation and differentiation. Required for the inhibition of skin inflammation mediated by REG3A through the activation of PI3K-AKT-STAT3 pathway. Required for the function of REG3A and REG3G in glucose tolerance in pancreas. Expressed in microglia, is activated by nociceptor-derived REG3G in response to endotoxins, leading to the inhibition of kynurenine pathway to prevent endotoxic death. The sequence is that of Exostosin-like 3 from Mus musculus (Mouse).